Reading from the N-terminus, the 374-residue chain is Ribosomal RNA large subunit methyltransferase M (374 aa).

S-adenosyl-L-methionine is bound by residues serine 188, 221-224, aspartate 240, aspartate 260, and aspartate 276; that span reads CPGG. Lysine 305 (proton acceptor) is an active-site residue.

It belongs to the class I-like SAM-binding methyltransferase superfamily. RNA methyltransferase RlmE family. RlmM subfamily. Monomer.

It localises to the cytoplasm. It carries out the reaction cytidine(2498) in 23S rRNA + S-adenosyl-L-methionine = 2'-O-methylcytidine(2498) in 23S rRNA + S-adenosyl-L-homocysteine + H(+). Its function is as follows. Catalyzes the 2'-O-methylation at nucleotide C2498 in 23S rRNA. The protein is Ribosomal RNA large subunit methyltransferase M of Edwardsiella ictaluri (strain 93-146).